A 30-amino-acid polypeptide reads, in one-letter code: Cycloviolacin-O20 (30 aa).

Positions 1–30 form a cross-link, cyclopeptide (Gly-Asp); that stretch reads GIPCGESCVWIPCLTSAIGCSCKSKVCYRD. 3 disulfides stabilise this stretch: C4/C20, C8/C22, and C13/C27.

This is a cyclic peptide.

Functionally, probably participates in a plant defense mechanism. The polypeptide is Cycloviolacin-O20 (Viola odorata (Sweet violet)).